Consider the following 343-residue polypeptide: 3-oxopimeloyl-[acyl-carrier-protein] synthase (343 aa).

Residues Cys-132 and His-272 contribute to the active site. The ACP-binding stretch occupies residues 273–277 (QANHR). Asn-302 is an active-site residue.

This sequence belongs to the thiolase-like superfamily. BioZ family.

The catalysed reaction is malonyl-[ACP] + an acyl-CoA + H(+) = a 3-oxoacyl-[ACP] + CO2 + CoA. It catalyses the reaction glutaryl-CoA + malonyl-[ACP] + H(+) = 3-oxo-6-carboxyhexanoyl-[ACP] + CO2 + CoA. It participates in cofactor biosynthesis; biotin biosynthesis. Involved in the formation of the biotin precursor pimeloyl-ACP. Catalyzes the condensation of glutaryl-CoA, an intermediate in lysine degradation, with malonyl-ACP to produce 3-oxopimeloyl-ACP. The protein is 3-oxopimeloyl-[acyl-carrier-protein] synthase of Rhodothermus marinus (strain ATCC 43812 / DSM 4252 / R-10) (Rhodothermus obamensis).